A 345-amino-acid chain; its full sequence is METGGLSAAALANGDLGSQRERTLVPERLQKREHERQLEVERRKQKRQDQEVEEEKSDFFAAAFARERSAVEELLESGESVERLEEAAARLQGLQKLINDSVLFLAAYDLRQAQEVLARLQAALAKRRQELQPKKRFAFKTRKKDAASATQVASAPDAPAAEGSLTSPPPLKEEGDFDSSWICGFSNLQSQVLEKRAEELHQQDVLLTQLRNCTIKLYGNPNTLRLTKAQGCTLLCGPVSTSVFLEDCSDCVLAVACQQLRVHTTKDTRIFLQVTSRAIMEDCTGIQFAPYTWSYPGIDKDFEGSGLDKNKNNWNDVDDFNWLARDVASPNWNVLPEEERRIQWD.

An N-acetylmethionine modification is found at Met1. The segment at 1-56 (METGGLSAAALANGDLGSQRERTLVPERLQKREHERQLEVERRKQKRQDQEVEEEK) is disordered. The span at 18-50 (SQRERTLVPERLQKREHERQLEVERRKQKRQDQ) shows a compositional bias: basic and acidic residues. Phosphoserine occurs at positions 80 and 167. Positions 139 to 170 (FKTRKKDAASATQVASAPDAPAAEGSLTSPPP) are disordered. One can recognise a C-CAP/cofactor C-like domain in the interval 170-322 (PLKEEGDFDS…NWNDVDDFNW (153 aa)).

Belongs to the TBCC family. As to quaternary structure, supercomplex made of cofactors A to E. Cofactors A and D function by capturing and stabilizing tubulin in a quasi-native conformation. Cofactor E binds to the cofactor D-tubulin complex; interaction with cofactor C then causes the release of tubulin polypeptides that are committed to the native state.

It is found in the cytoplasm. In terms of biological role, tubulin-folding protein; involved in the final step of the tubulin folding pathway. The polypeptide is Tubulin-specific chaperone C (TBCC) (Bos taurus (Bovine)).